A 1475-amino-acid chain; its full sequence is Gag-Pol polyprotein (1475 aa).

Positions 130–147 (TQNTQNKKQTSNQTNTQS) are enriched in low complexity. Positions 130 to 159 (TQNTQNKKQTSNQTNTQSLPAITTQDGTPR) are disordered. CCHC-type zinc fingers lie at residues 403–420 (RRCY…NCKQ) and 421–438 (QKCY…NCRS). The 74-residue stretch at 492–565 (VKGLVDTGAD…TPVNLFGRSL (74 aa)) folds into the Peptidase A2 domain. Asp497 is an active-site residue. Residues 619–806 (EGKISEAAWD…ERVKWIGFEL (188 aa)) form the Reverse transcriptase domain. Residues 999 to 1119 (RENLTTYYTD…ADEGVKKALE (121 aa)) enclose the RNase H type-1 domain. The segment at 1199-1240 (ENIPSATEDHERWHTSPDILVRQFHLPKRIAKEIVARCQECK) adopts an Integrase-type zinc-finger fold. Zn(2+) contacts are provided by His1208, His1212, Cys1236, and Cys1239. The 153-residue stretch at 1248 to 1400 (RGTNPRGRFL…TPYEIYLESE (153 aa)) folds into the Integrase catalytic domain. A DNA-binding region (integrase-type) is located at residues 1419–1465 (KWCYVRNRRKEWKGPYKVLWDGDGAAVIEEEGKTALYPHRHMRFIPP).

In terms of assembly, interacts with host light chain cytoplasmic dynein DYNLL1; this interaction is critical for intracellular microtubule-dependent viral genome transport. Post-translationally, specific enzymatic cleavages by the viral protease yield mature proteins. The protease is released by autocatalytic cleavage. The polyprotein is cleaved during and after budding, this process is termed maturation.

The protein resides in the virion. It carries out the reaction DNA(n) + a 2'-deoxyribonucleoside 5'-triphosphate = DNA(n+1) + diphosphate. It catalyses the reaction Endohydrolysis of RNA in RNA/DNA hybrids. Three different cleavage modes: 1. sequence-specific internal cleavage of RNA. Human immunodeficiency virus type 1 and Moloney murine leukemia virus enzymes prefer to cleave the RNA strand one nucleotide away from the RNA-DNA junction. 2. RNA 5'-end directed cleavage 13-19 nucleotides from the RNA end. 3. DNA 3'-end directed cleavage 15-20 nucleotides away from the primer terminus.. The catalysed reaction is 3'-end directed exonucleolytic cleavage of viral RNA-DNA hybrid.. Functionally, matrix protein p16 forms the outer shell of the core of the virus, lining the inner surface of the viral membrane. Capsid protein p26 forms the conical core of the virus that encapsulates the genomic RNA-nucleocapsid complex. Interaction between incoming particle-associated Gag proteins and host dynein allows intracellular microtubule-dependent virus transport toward the perinuclear region, prior to nucleus translocation and integration into host genome. Its function is as follows. The aspartyl protease mediates proteolytic cleavages of Gag and Gag-Pol polyproteins during or shortly after the release of the virion from the plasma membrane. Cleavages take place as an ordered, step-wise cascade to yield mature proteins. This process is called maturation. Displays maximal activity during the budding process just prior to particle release from the cell. In terms of biological role, reverse transcriptase/ribonuclease H (RT) is a multifunctional enzyme that converts the viral RNA genome into dsDNA in the cytoplasm, shortly after virus entry into the cell. This enzyme displays a DNA polymerase activity that can copy either DNA or RNA templates, and a ribonuclease H (RNase H) activity that cleaves the RNA strand of RNA-DNA heteroduplexes in a partially processive 3' to 5' endonucleasic mode. Conversion of viral genomic RNA into dsDNA requires many steps. A tRNA binds to the primer-binding site (PBS) situated at the 5'-end of the viral RNA. RT uses the 3' end of the tRNA primer to perform a short round of RNA-dependent minus-strand DNA synthesis. The reading proceeds through the U5 region and ends after the repeated (R) region which is present at both ends of viral RNA. The portion of the RNA-DNA heteroduplex is digested by the RNase H, resulting in a ssDNA product attached to the tRNA primer. This ssDNA/tRNA hybridizes with the identical R region situated at the 3' end of viral RNA. This template exchange, known as minus-strand DNA strong stop transfer, can be either intra- or intermolecular. RT uses the 3' end of this newly synthesized short ssDNA to perform the RNA-dependent minus-strand DNA synthesis of the whole template. RNase H digests the RNA template except for a polypurine tract (PPT) situated at the 5'-end of the genome. It is not clear if both polymerase and RNase H activities are simultaneous. RNase H probably can proceed both in a polymerase-dependent (RNA cut into small fragments by the same RT performing DNA synthesis) and a polymerase-independent mode (cleavage of remaining RNA fragments by free RTs). Secondly, RT performs DNA-directed plus-strand DNA synthesis using the PPT that has not been removed by RNase H as primer. PPT and tRNA primers are then removed by RNase H. The 3' and 5' ssDNA PBS regions hybridize to form a circular dsDNA intermediate. Strand displacement synthesis by RT to the PBS and PPT ends produces a blunt ended, linear dsDNA copy of the viral genome that includes long terminal repeats (LTRs) at both ends. Functionally, integrase catalyzes viral DNA integration into the host chromosome, by performing a series of DNA cutting and joining reactions. This enzyme activity takes place after virion entry into a cell and reverse transcription of the RNA genome in dsDNA. This chain is Gag-Pol polyprotein (gag-pol), found in Bovine immunodeficiency virus (strain R29) (BIV).